The chain runs to 272 residues: Tryptophan synthase alpha chain (272 aa).

Active-site proton acceptor residues include glutamate 49 and glutamate 60.

It belongs to the TrpA family. As to quaternary structure, tetramer of two alpha and two beta chains.

The catalysed reaction is (1S,2R)-1-C-(indol-3-yl)glycerol 3-phosphate + L-serine = D-glyceraldehyde 3-phosphate + L-tryptophan + H2O. Its pathway is amino-acid biosynthesis; L-tryptophan biosynthesis; L-tryptophan from chorismate: step 5/5. In terms of biological role, the alpha subunit is responsible for the aldol cleavage of indoleglycerol phosphate to indole and glyceraldehyde 3-phosphate. This is Tryptophan synthase alpha chain from Legionella pneumophila (strain Paris).